A 230-amino-acid chain; its full sequence is MKADVFDPRALREAFGAFPTAVTVITASDPAGRPVGFTANSFTSVSLDPPLLLVCVAKTARDYSTMTAAEHFAINILSEAQKDVSIKFARPLEDRFAAVDWARAPNGCPIFAQVAAWFECSMHDVIEAGDHVMMVGRVTAFKSSGLNGLGYARGGYFAPSVAAKANSSAAGGEIGAVAVLERHAALFPLGDQNLSLPRYSAAGGDPAKTLASQLERSGLSVHDWLSLLDL.

Belongs to the non-flavoprotein flavin reductase family. As to quaternary structure, the system is probably composed of an oxygenase subunit (Stc2) and two reductase subunits (Stc3 and Stc4).

Functionally, reductase involved in the catabolism of stachydrine (L-proline betaine), a source of carbon and nitrogen. Part of a Rieske-type oxygenase system that catalyzes the demethylation of stachydrine to produce N-methyl-L-proline (monomethylproline). This subunit is probably involved in the transfer of electrons from NAD(P)H to the catalytic subunit Stc2. The chain is Stachydrine N-demethylase reductase subunit Stc3 from Rhizobium meliloti (strain 1021) (Ensifer meliloti).